We begin with the raw amino-acid sequence, 470 residues long: Transcription factor SOX-8 (470 aa).

The span at 1–12 shows a compositional bias: basic and acidic residues; that stretch reads MLNMTEEHDKAL. A disordered region spans residues 1–60; it reads MLNMTEEHDKALEAPCSPAGTTSSMSHVDSDSDSPLSPAGSEGLGCAPAPAPRPPGAAPL. The interval 67-107 is dimerization (DIM); the sequence is AEVDERFPACIRDAVSQVLKGYDWSLVPMPVRGNGSLKAKP. Residues 109 to 177 constitute a DNA-binding region (HMG box); sequence VKRPMNAFMV…QHKKDHPDYK (69 aa). 3 stretches are compositionally biased toward basic and acidic residues: residues 163-178, 219-228, and 242-257; these read ERLR…DYKY, DGHHHGEHAG, and TDLH…HEGR. Disordered regions lie at residues 163-257 and 327-381; these read ERLR…HEGR and AGGA…DYGS. Residues 233 to 308 form a transactivation domain (TAM) region; sequence PPTPPTTPKT…LNGHTAMPAD (76 aa). The span at 338-349 shows a compositional bias: low complexity; sequence SPASASPSSADS. The transactivation domain (TAC) stretch occupies residues 353-470; sequence RPHIKTEQLS…QPVYTTLTRP (118 aa). Residues 359–372 show a composition bias toward polar residues; sequence EQLSPSHYSDQSHG. Positions 424-432 match the 9aaTAD motif; the sequence is SSIYQYPYF.

Widely expressed in the embryo.

Its subcellular location is the nucleus. Transcription factor that may play a role in central nervous system, limb and facial development. May be involved in male sex determination. Binds the consensus motif 5'-[AT][AT]CAA[AT]G-3'. In Gallus gallus (Chicken), this protein is Transcription factor SOX-8 (SOX8).